The following is a 115-amino-acid chain: ESX-1 secretion-associated protein EspL (115 aa).

This is ESX-1 secretion-associated protein EspL from Mycobacterium tuberculosis (strain CDC 1551 / Oshkosh).